A 252-amino-acid chain; its full sequence is MGQKVSPTGLRVGVIKTWDSRWYAEKQEYVKWLHQDIKIRKALMKELKGASVSKIEIERTKKEIVIFIRTARVGVVLGQEGKNIAKLVKLVHITIGDRKMEVKINVVEIKNPDTDAQLVANTIAEQIVNRASFRSVQKLAIKKAMKAGAQGIKTSVSGRLGGVDMARTEGYTKGTVPLATLRSDIDFALAEALTTYGQIGVKVWICKGEILSKELVSTSDEKPKFEKRDFNRSNNNRRDQAPKSHPVAKEAK.

The region spanning 39-110 is the KH type-2 domain; the sequence is IRKALMKELK…EVKINVVEIK (72 aa). Residues 218 to 252 are disordered; the sequence is TSDEKPKFEKRDFNRSNNNRRDQAPKSHPVAKEAK. Basic and acidic residues predominate over residues 219 to 252; it reads SDEKPKFEKRDFNRSNNNRRDQAPKSHPVAKEAK.

It belongs to the universal ribosomal protein uS3 family. Part of the 30S ribosomal subunit. Forms a tight complex with proteins S10 and S14.

Functionally, binds the lower part of the 30S subunit head. Binds mRNA in the 70S ribosome, positioning it for translation. In Spiroplasma citri, this protein is Small ribosomal subunit protein uS3.